A 77-amino-acid polypeptide reads, in one-letter code: U8-lycotoxin-Ls1s (77 aa).

Residues 1–20 (MKLIIFTGLVLFAIVSLIEA) form the signal peptide. A propeptide spanning residues 21–26 (QAENER) is cleaved from the precursor.

It belongs to the neurotoxin 19 (CSTX) family. 08 (U8-Lctx) subfamily. Contains 4 disulfide bonds. Expressed by the venom gland.

It localises to the secreted. The polypeptide is U8-lycotoxin-Ls1s (Lycosa singoriensis (Wolf spider)).